A 209-amino-acid chain; its full sequence is Uridine kinase (209 aa).

12-19 serves as a coordination point for ATP; the sequence is GGSGSGKT.

It belongs to the uridine kinase family.

Its subcellular location is the cytoplasm. It catalyses the reaction uridine + ATP = UMP + ADP + H(+). The catalysed reaction is cytidine + ATP = CMP + ADP + H(+). It functions in the pathway pyrimidine metabolism; CTP biosynthesis via salvage pathway; CTP from cytidine: step 1/3. It participates in pyrimidine metabolism; UMP biosynthesis via salvage pathway; UMP from uridine: step 1/1. This is Uridine kinase from Listeria innocua serovar 6a (strain ATCC BAA-680 / CLIP 11262).